A 1258-amino-acid chain; its full sequence is Phospholipid-transporting ATPase C887.12 (1258 aa).

Disordered regions lie at residues 1 to 41 (MARD…LGED) and 53 to 83 (YISS…SKAN). Topologically, residues 1 to 183 (MARDVDNKQN…PKFLKEQFSK (183 aa)) are cytoplasmic. Positions 53 to 64 (YISSSGQNSTNP) are enriched in polar residues. The helical transmembrane segment at 184 to 204 (YANLFFLFTAVVQQIPGITPV) threads the bilayer. At 205–208 (NRYT) the chain is on the lumenal side. The helical transmembrane segment at 209–229 (TIGPMLIVLSVSGIKEIMEDI) threads the bilayer. At 230–406 (KRKKQDQELN…TSVEKQVNSQ (177 aa)) the chain is on the cytoplasmic side. A helical transmembrane segment spans residues 407–427 (ILFLLCIFVFLCFASSLGALI). The Lumenal segment spans residues 428–451 (HRSVYGSALSYVKYTSNRAGMFFK). Residues 452 to 472 (GLLTFWILYSNLVPISLFVTF) form a helical membrane-spanning segment. Residues 473 to 974 (ELVRYIQAQL…KLILYSFYKN (502 aa)) lie on the Cytoplasmic side of the membrane. Asp-518 (4-aspartylphosphate intermediate) is an active-site residue. 15 residues coordinate ATP: Asp-518, Lys-519, Thr-520, Glu-613, Phe-654, Ser-656, Lys-659, Lys-677, Arg-710, Thr-711, Thr-790, Gly-791, Asp-792, Arg-883, and Lys-889. A Mg(2+)-binding site is contributed by Asp-518. Thr-520 is a Mg(2+) binding site. A Mg(2+)-binding site is contributed by Asp-909. Asn-912 and Asp-913 together coordinate ATP. Residue Asp-913 participates in Mg(2+) binding. A helical membrane pass occupies residues 975-995 (IALYMTQFWYAFCNAFSGQVI). The Lumenal portion of the chain corresponds to 996–998 (FES). The helical transmembrane segment at 999–1019 (WSISLYNVLFTVLPPVVIGIF) threads the bilayer. The Cytoplasmic segment spans residues 1020–1051 (DQFVSAGQLFQYPQLYQLGQRSEFFNLKRFWS). The chain crosses the membrane as a helical span at residues 1052-1072 (WITNGFYHSLLLFLCSIAVFY). Residues 1073–1086 (YDGPNKDGLASGHW) are Lumenal-facing. Residues 1087-1107 (VWGTTLYAAILATVLGKAALI) form a helical membrane-spanning segment. Lys-1103 lines the a 1,2-diacyl-sn-glycero-3-phospho-(1D-myo-inositol 4-phosphate) pocket. At 1108 to 1115 (SNHWTQYT) the chain is on the cytoplasmic side. Residues 1116 to 1136 (VIATLGSFLLWIVFMPIYAVA) traverse the membrane as a helical segment. At 1137–1148 (APAIGFSKEYYG) the chain is on the lumenal side. The helical transmembrane segment at 1149–1169 (IIPHLYGNLKFWASLLVLPTI) threads the bilayer. At 1170 to 1258 (ALMRDFVWKY…HTRGAYGEMR (89 aa)) the chain is on the cytoplasmic side. Arg-1173, Trp-1177, Lys-1178, Tyr-1189, and His-1190 together coordinate a 1,2-diacyl-sn-glycero-3-phospho-(1D-myo-inositol 4-phosphate).

This sequence belongs to the cation transport ATPase (P-type) (TC 3.A.3) family. Type IV subfamily. It depends on Mg(2+) as a cofactor.

The protein localises to the endoplasmic reticulum membrane. It is found in the golgi apparatus. The protein resides in the trans-Golgi network membrane. It catalyses the reaction ATP + H2O + phospholipidSide 1 = ADP + phosphate + phospholipidSide 2.. The enzyme catalyses a 1,2-diacyl-sn-glycero-3-phospho-L-serine(out) + ATP + H2O = a 1,2-diacyl-sn-glycero-3-phospho-L-serine(in) + ADP + phosphate + H(+). The catalysed reaction is a 1,2-diacyl-sn-glycero-3-phosphoethanolamine(out) + ATP + H2O = a 1,2-diacyl-sn-glycero-3-phosphoethanolamine(in) + ADP + phosphate + H(+). Catalytic component of a P4-ATPase flippase complex which catalyzes the hydrolysis of ATP coupled to the transport of phosphatidylserine and small amounts of ethanolamine from the lumen to the cytosolic leaflet of the trans-Golgi network and ensures the maintenance of asymmetric distribution of phospholipids. This chain is Phospholipid-transporting ATPase C887.12, found in Schizosaccharomyces pombe (strain 972 / ATCC 24843) (Fission yeast).